The sequence spans 266 residues: Glucosamine-6-phosphate deaminase (266 aa).

Asp72 functions as the Proton acceptor; for enolization step in the catalytic mechanism. Asp141 (for ring-opening step) is an active-site residue. His143 acts as the Proton acceptor; for ring-opening step in catalysis. Glu148 functions as the For ring-opening step in the catalytic mechanism.

The protein belongs to the glucosamine/galactosamine-6-phosphate isomerase family. NagB subfamily. In terms of assembly, homohexamer.

The enzyme catalyses alpha-D-glucosamine 6-phosphate + H2O = beta-D-fructose 6-phosphate + NH4(+). The protein operates within amino-sugar metabolism; N-acetylneuraminate degradation; D-fructose 6-phosphate from N-acetylneuraminate: step 5/5. Allosterically activated by N-acetylglucosamine 6-phosphate (GlcNAc6P). In terms of biological role, catalyzes the reversible isomerization-deamination of glucosamine 6-phosphate (GlcN6P) to form fructose 6-phosphate (Fru6P) and ammonium ion. The chain is Glucosamine-6-phosphate deaminase from Yersinia pseudotuberculosis serotype O:1b (strain IP 31758).